The primary structure comprises 311 residues: Methionyl-tRNA formyltransferase (311 aa).

109–112 provides a ligand contact to (6S)-5,6,7,8-tetrahydrofolate; that stretch reads SKLP.

Belongs to the Fmt family.

The enzyme catalyses L-methionyl-tRNA(fMet) + (6R)-10-formyltetrahydrofolate = N-formyl-L-methionyl-tRNA(fMet) + (6S)-5,6,7,8-tetrahydrofolate + H(+). Attaches a formyl group to the free amino group of methionyl-tRNA(fMet). The formyl group appears to play a dual role in the initiator identity of N-formylmethionyl-tRNA by promoting its recognition by IF2 and preventing the misappropriation of this tRNA by the elongation apparatus. The polypeptide is Methionyl-tRNA formyltransferase (fmt) (Mycoplasma pneumoniae (strain ATCC 29342 / M129 / Subtype 1) (Mycoplasmoides pneumoniae)).